The following is a 467-amino-acid chain: Retinoic acid receptor RXR-alpha (467 aa).

A disordered region spans residues 1–61 (MDTKHFLPLD…LHSPISTLSS (61 aa)). A modulating region spans residues 1-139 (MDTKHFLPLD…GNMSSFTKHI (139 aa)). Residue Lys4 forms a Glycyl lysine isopeptide (Lys-Gly) (interchain with G-Cter in SUMO2) linkage. Ser22 and Ser28 each carry phosphoserine. A compositionally biased stretch (low complexity) spans 32–55 (PSLHPSLGPGLGSPLGSPGQLHSP). Ser61 and Ser75 each carry phosphoserine; by MAPK8 and MAPK9. The tract at residues 79–109 (PHSMSVPTTPTLGFETGSPQLNSPMNPVSSS) is disordered. Over residues 83–109 (SVPTTPTLGFETGSPQLNSPMNPVSSS) the composition is skewed to polar residues. Thr87 carries the phosphothreonine; by MAPK8 and MAPK9 modification. Lys113 is covalently cross-linked (Glycyl lysine isopeptide (Lys-Gly) (interchain with G-Cter in SUMO)). Ser134 carries the post-translational modification Phosphoserine. Zn(2+)-binding residues include Cys140 and Cys143. The NR C4-type zinc-finger motif lies at 140-160 (CAICGDRSSGKHYGVYSCEGC). Residues 140 to 205 (CAICGDRSSG…RYQKCLAMGM (66 aa)) constitute a DNA-binding region (nuclear receptor). At Lys150 the chain carries N6-acetyllysine. Zn(2+) is bound by residues Cys157 and Cys160. The tract at residues 165 to 170 (KRTVRK) is nuclear localization signal. Residues Cys176, Cys182, Cys192, and Cys195 each contribute to the Zn(2+) site. The NR C4-type zinc-finger motif lies at 176–200 (CRDNKDCLIDKRQRNRCQYCRYQKC). The segment at 206-229 (KREAVQEERQRGKDRNENEVESTS) is hinge. Residues 211-223 (QEERQRGKDRNEN) are compositionally biased toward basic and acidic residues. Residues 211–233 (QEERQRGKDRNENEVESTSSANE) are disordered. Residues 232–463 (NEDMPVEKIL…TFLMEMLEAP (232 aa)) form the NR LBD domain. Ser264 is subject to Phosphoserine. Ser265 is subject to Phosphoserine; by MAPK8 and MAPK9. The 9-cis-retinoate site is built by Arg321 and Ala332. All-trans-retinoate-binding residues include Arg321 and Ala332. Residues 353 to 373 (RVLTELVSKMRDMQMDKTELG) are required for nuclear export.

The protein belongs to the nuclear hormone receptor family. NR2 subfamily. As to quaternary structure, homodimer. Heterodimer (via C-terminus) with RARA; required for ligand-dependent retinoic acid receptor transcriptional activity; association with RARA is enhanced by pulsatile shear stress. Heterodimer with PPARA (via the leucine-like zipper in the LBD); the interaction is required for PPARA transcriptional activity. Heterodimerizes with PPARG. Heterodimerizes (via NR LBD) with RARB. Heterodimerizes with NR1H4; the heterodimerization enhances the binding affinity for LXXLL motifs from coactivators. Interacts with NCOA3 and NCOA6 coactivators. Interacts with FAM120B. Interacts with coactivator PELP1, SENP6, SFPQ, DNTTIP2 and RNF8. Interacts with PRMT2. Interacts with ASXL1. Interacts with BHLHE40/DEC1, BHLHE41/DEC2, MED1, NCOR1 and NCOR2. Interacts in a ligand-dependent fashion with MED1 and NCOA1. Interacts with VDR. Interacts with EP300; the interaction is decreased by 9-cis retinoic acid. Heterodimer (via C-terminus) with NR4A1 (DNA-binding domain); the interaction is enhanced by 9-cis retinoic acid. NR4A1 competes with EP300 for interaction with RXRA and thereby attenuates EP300 mediated acetylation of RXRA. In the absence of hormonal ligand, interacts with TACC1. Interacts ith IGFBP3. Phosphorylated on serine and threonine residues mainly in the N-terminal modulating domain. Constitutively phosphorylated on Ser-22 in the presence or absence of ligand. Under stress conditions, hyperphosphorylated by activated JNK on Ser-61, Ser-75, Thr-87 and Ser-265. Phosphorylated on Ser-28, in vitro, by PKA. This phosphorylation is required for repression of cAMP-mediated transcriptional activity of RARA. In terms of processing, ubiquitinated by UBR5, leading to its degradation: UBR5 specifically recognizes and binds ligand-bound RXRA when it is not associated with coactivators (NCOAs). In presence of NCOAs, the UBR5-degron is not accessible, preventing its ubiquitination and degradation. Post-translationally, sumoylation negatively regulates transcriptional activity. Desumoylated specifically by SENP6. Acetylated by EP300; acetylation enhances DNA binding and transcriptional activity. In terms of tissue distribution, expressed in the adrenal gland with main expression in the zona fasciculata and medulla (at protein level). Expressed in aortic endothelial cells, with high expression in the descending thoracic aorta and the outer curvature of the aortic arch, where pulsatory shear stress exists, but very low in the inner curvature of the aortic arch, where oscillatory shear stress prevails (at protein level).

It is found in the nucleus. Its subcellular location is the cytoplasm. The protein resides in the mitochondrion. In terms of biological role, receptor for retinoic acid that acts as a transcription factor. Forms homo- or heterodimers with retinoic acid receptors (RARs) and binds to target response elements in response to their ligands, all-trans or 9-cis retinoic acid, to regulate gene expression in various biological processes. The RAR/RXR heterodimers bind to the retinoic acid response elements (RARE) composed of tandem 5'-AGGTCA-3' sites known as DR1-DR5 to regulate transcription. The high affinity ligand for retinoid X receptors (RXRs) is 9-cis retinoic acid. In the absence of ligand, the RXR-RAR heterodimers associate with a multiprotein complex containing transcription corepressors that induce histone deacetylation, chromatin condensation and transcriptional suppression. On ligand binding, the corepressors dissociate from the receptors and coactivators are recruited leading to transcriptional activation. Serves as a common heterodimeric partner for a number of nuclear receptors, such as RARA, RARB and PPARA. The RXRA/RARB heterodimer can act as a transcriptional repressor or transcriptional activator, depending on the RARE DNA element context. The RXRA/PPARA heterodimer is required for PPARA transcriptional activity on fatty acid oxidation genes such as ACOX1 and the P450 system genes. Together with RARA, positively regulates microRNA-10a expression, thereby inhibiting the GATA6/VCAM1 signaling response to pulsatile shear stress in vascular endothelial cells. Acts as an enhancer of RARA binding to RARE DNA element. May facilitate the nuclear import of heterodimerization partners such as VDR and NR4A1. Promotes myelin debris phagocytosis and remyelination by macrophages. Plays a role in the attenuation of the innate immune system in response to viral infections, possibly by negatively regulating the transcription of antiviral genes such as type I IFN genes. Involved in the regulation of calcium signaling by repressing ITPR2 gene expression, thereby controlling cellular senescence. The polypeptide is Retinoic acid receptor RXR-alpha (Rxra) (Rattus norvegicus (Rat)).